Reading from the N-terminus, the 141-residue chain is Large-conductance mechanosensitive channel (141 aa).

Transmembrane regions (helical) follow at residues 21–41 and 85–105; these read VGVIIGGAFGKIVDSIVGDLI and GSFLTILVNFIILAFIIFMMV.

The protein belongs to the MscL family. Homopentamer.

Its subcellular location is the cell inner membrane. Channel that opens in response to stretch forces in the membrane lipid bilayer. May participate in the regulation of osmotic pressure changes within the cell. The chain is Large-conductance mechanosensitive channel from Dechloromonas aromatica (strain RCB).